A 354-amino-acid chain; its full sequence is Dye-decolorizing peroxidase (354 aa).

D165 serves as the catalytic Proton acceptor. Heme is bound at residue H238. Residues 312-335 are targeting peptide; the sequence is GLFFSPTVDFLDDPPPLPAPGTPA. The span at 324–337 shows a compositional bias: pro residues; the sequence is DPPPLPAPGTPAAP. Residues 324–354 are disordered; it reads DPPPLPAPGTPAAPPARNGSLSIGSLKGTTR. Over residues 342 to 354 the composition is skewed to polar residues; the sequence is GSLSIGSLKGTTR.

This sequence belongs to the DyP-type peroxidase family. As to quaternary structure, found in a complex with type 1 encapsulin, strongly suggesting it is found in a type 1 encapsulin nanocompartment. Homotetramer, presumably also in the type 1 encapsulin nanocompartment. Requires heme b as cofactor.

Its subcellular location is the encapsulin nanocompartment. It localises to the cell membrane. It catalyses the reaction 2 a phenolic donor + H2O2 = 2 a phenolic radical donor + 2 H2O. In terms of biological role, cargo protein of a type 1 encapsulin nanocompartment. A heme-dependent peroxidase. This cargo-loaded encapsulin nanocompartment is probably involved in protection against oxidative damage. The protein is Dye-decolorizing peroxidase of Mycolicibacterium paratuberculosis (strain ATCC BAA-968 / K-10) (Mycobacterium paratuberculosis).